Consider the following 782-residue polypeptide: MAEPPRLPLTFEDVAIYFSEQEWQDLEAWQKELYKHVMRSNYETLVSLDDGLPKPELISWIEHGGEPFRKWRESQKSGNIICSSVDMHFDPGFEEQLFWGSQQAMNSGKTKSHFQLDPESQCSFGSFVSFRPDQGITLGSPQRHDARAPPPLACGPSESTLKEGIPGPRNLDLPGLWDVPAWESTQHPWPVCGESCWENNHLVMHQRGHSKDRTRRAWEKFNKRAETQMPWSSPRVQRHFRCGVCGKSFRRKLCLLRHLAAHTGRGPFRNADGEMCFRHELTHPSHRLPQQGEKPAQCTPCGKRSLPVDSTQARRCQHSREGPASWREGRGASSSVHSGQKPGSRLPQEGNSHQEGDTEALQHGAEGPCSCSECGERSPMSARLASPCRAHTGEKPFQCAHCTKRFRLRRLLQVHQHAHGGERPFSCRKCGKGFAKQCKLTEHIRVHSGEKPFRCAKCGRNFRQRGQLLRHQRLHTDEKPFQCPECGLSFRLESMLRAHRLRHGGERPFSCSECGRGFTHQCKLREHLRVHSGERPFQCLKCDKRFRLKGILKAHQHTHSKERPFSCGECGKGFTRQSKLTEHLRVHSGERPFQCPECNRSFRLKGQLLSHQRLHTGERPFQCPECDKRYRVKADMKAHQLLHSGEMPFSCECGKGFVKHSKLIEHIRTHTGEKPFQCPKCDKSFRLKAQLLSHQGLHTGERPFHCPECDKNFRERGHMLRHQRIHRPERPFACGDCGKGFIYKSKLAEHIRVHTKSCPAPNELDIKKRLSQLFAMIEADWS.

The region spanning L9–I80 is the KRAB domain. Residues P141–G164 form a disordered region. The segment at C192–H209 adopts a C2H2-type 1; degenerate zinc-finger fold. Residues F240–H262 form a C2H2-type 2 zinc finger. The tract at residues S285–G364 is disordered. A C2H2-type 3; degenerate zinc finger spans residues C369–H391. 3 C2H2-type zinc fingers span residues F397 to H419, F425 to H447, and F453 to H475. The C2H2-type 7; degenerate zinc finger occupies F481 to H503. 9 C2H2-type zinc fingers span residues F509–H531, F537–H559, F565–H587, F593–H615, F621–H643, F649–H670, F676–H698, F704–H726, and F732–H754.

The protein belongs to the krueppel C2H2-type zinc-finger protein family.

Its subcellular location is the nucleus. Functionally, may be involved in transcriptional regulation. The protein is Zinc finger protein 786 (ZNF786) of Homo sapiens (Human).